The following is a 163-amino-acid chain: Inorganic pyrophosphatase (163 aa).

Residues Lys21, Arg35, and Tyr47 each coordinate substrate. Mg(2+)-binding residues include Asp57, Asp62, and Asp94. Position 131 (Tyr131) interacts with substrate.

The protein belongs to the PPase family. As to quaternary structure, homohexamer. Mg(2+) is required as a cofactor.

The protein resides in the cytoplasm. It catalyses the reaction diphosphate + H2O = 2 phosphate + H(+). Catalyzes the hydrolysis of inorganic pyrophosphate (PPi) forming two phosphate ions. The sequence is that of Inorganic pyrophosphatase from Halalkalibacterium halodurans (strain ATCC BAA-125 / DSM 18197 / FERM 7344 / JCM 9153 / C-125) (Bacillus halodurans).